We begin with the raw amino-acid sequence, 693 residues long: tRNA (guanine(27)-N(2))-dimethyltransferase (693 aa).

Residues 95 to 99 carry the Nucleolar localization signal motif; it reads HKLRR. Residues 144 to 166 form a C2H2-type zinc finger; it reads YHCIICSATITRRTDMLGHVRRH. Residues 187–648 enclose the Trm1 methyltransferase domain; sequence EILKEADTDV…APLMQFKSIL (462 aa). Residues Arg220, Asp267, Asp317, and Ala318 each coordinate S-adenosyl-L-methionine. Positions 448, 451, 473, and 475 each coordinate Zn(2+). Lys545 participates in a covalent cross-link: Glycyl lysine isopeptide (Lys-Gly) (interchain with G-Cter in SUMO2). Residues Ser572 and Ser667 each carry the phosphoserine modification.

Belongs to the class I-like SAM-binding methyltransferase superfamily. Trm1 family.

It is found in the nucleus. The protein resides in the nucleolus. It carries out the reaction guanosine(27) in tRNA(Tyr) + 2 S-adenosyl-L-methionine = N(2)-dimethylguanosine(27) in tRNA(Tyr) + 2 S-adenosyl-L-homocysteine + 2 H(+). Specifically dimethylates a single guanine residue at position 27 of tRNA(Tyr) using S-adenosyl-L-methionine as donor of the methyl groups. Dimethylation at position 27 of tRNA(Tyr) is required for efficient translation of tyrosine codons. Also required to maintain 3-(3-amino-3-carboxypropyl)uridine (acp3U) in the D-loop of several cytoplasmic tRNAs. The polypeptide is tRNA (guanine(27)-N(2))-dimethyltransferase (TRMT1L) (Macaca fascicularis (Crab-eating macaque)).